The sequence spans 283 residues: Galactooligosaccharides transport system permease protein GanQ (283 aa).

6 helical membrane passes run 13–33 (LLFS…PLLW), 82–102 (ISLF…YAFS), 115–135 (LFLL…FVLA), 137–157 (ILGM…GLIP), 188–208 (IFFQ…AMNG), and 248–268 (TTFA…FIML). An ABC transmembrane type-1 domain is found at 76-268 (YVNSMKISLF…IPVAVIFIML (193 aa)).

This sequence belongs to the binding-protein-dependent transport system permease family. As to quaternary structure, the complex is composed of two ATP-binding proteins (MsmX), two transmembrane proteins (GanP and GanQ) and a solute-binding protein (GanS).

It localises to the cell membrane. Its function is as follows. Involved in galactan degradation. Part of the ABC transporter complex GanPQS involved in the uptake of galactooligosaccharides. Responsible for the translocation of the substrate across the membrane. The polypeptide is Galactooligosaccharides transport system permease protein GanQ (ganQ) (Bacillus subtilis (strain 168)).